The chain runs to 105 residues: Thioredoxin (105 aa).

The 105-residue stretch at 1-105 folds into the Thioredoxin domain; it reads MANNVMDSSF…SLLDWINKSI (105 aa). Cysteine 30 and cysteine 33 form a disulfide bridge.

This sequence belongs to the thioredoxin family.

In terms of biological role, component of the thioredoxin-thioredoxin reductase system. Participates in various redox reactions through the reversible oxidation of its active center dithiol to a disulfide and catalyzes dithiol-disulfide exchange reactions. This is Thioredoxin (trxA) from Rickettsia conorii (strain ATCC VR-613 / Malish 7).